The chain runs to 929 residues: Protein translocase subunit SecA (929 aa).

ATP contacts are provided by residues Gln83, 101–105 (GEGKT), and Asp491.

It belongs to the SecA family. In terms of assembly, monomer and homodimer. Part of the essential Sec protein translocation apparatus which comprises SecA, SecYEG and auxiliary proteins SecDF. Other proteins may also be involved.

The protein resides in the cell inner membrane. Its subcellular location is the cellular thylakoid membrane. The protein localises to the cytoplasm. It catalyses the reaction ATP + H2O + cellular proteinSide 1 = ADP + phosphate + cellular proteinSide 2.. Functionally, part of the Sec protein translocase complex. Interacts with the SecYEG preprotein conducting channel. Has a central role in coupling the hydrolysis of ATP to the transfer of proteins into and across the cell membrane, serving as an ATP-driven molecular motor driving the stepwise translocation of polypeptide chains across the membrane. Its function is as follows. Probably participates in protein translocation into and across both the cytoplasmic and thylakoid membranes in cyanobacterial cells. The chain is Protein translocase subunit SecA from Thermosynechococcus vestitus (strain NIES-2133 / IAM M-273 / BP-1).